The following is a 116-amino-acid chain: Vesicle-associated membrane protein 2 (116 aa).

Residues 1-33 (MSATAATAPPAAPAGEGGPPAPPPNLTSNRRLQ) form a disordered region. N-acetylserine is present on Ser2. Over 2–94 (SATAATAPPA…KRKYWWKNLK (93 aa)) the chain is Cytoplasmic. Residues 31-91 (RLQQTQAQVD…AKLKRKYWWK (61 aa)) enclose the v-SNARE coiled-coil homology domain. Residues 92 to 116 (NLKMMIILGVICAIILIIIIVYFSS) form a required for interaction with SEPT8 region. Residues 95-114 (MMIILGVICAIILIIIIVYF) traverse the membrane as a helical; Anchor for type IV membrane protein segment. The Vesicular portion of the chain corresponds to 115-116 (SS).

The protein belongs to the synaptobrevin family. In terms of assembly, part of the SNARE core complex containing SNAP25, VAMP2 and STX1A; this complex constitutes the basic catalytic machinery of the complex neurotransmitter release apparatus. Recruited to the SNARE complex following binding of the SNARE complex component STX1A to STXBP1. This complex binds to CPLX1. Interacts with POPDC1 and STX4. Interacts with VAPA and VAPB. Interacts with WDFY2, PRKCZ and PRKCI. Forms a complex with WDFY2 and PRKCZ. Interacts (via N-terminus) with KCNB1 (via N-terminus and C-terminus); stimulates the channel inactivation rate of KCNB1. Interacts with SEPT8; the interaction inhibits interaction of VAMP2 with SYP. Interacts with SYP; the interaction is inhibited by interaction with SEPT8. Interacts with PICALM. Interacts with alpha-synuclein/SNCA. Interacts with STX3. In terms of processing, phosphorylated by PRKCZ in vitro and this phosphorylation is increased in the presence of WDFY2.

It is found in the cytoplasmic vesicle. It localises to the secretory vesicle. The protein localises to the synaptic vesicle membrane. Its subcellular location is the cell membrane. Involved in the targeting and/or fusion of transport vesicles to their target membrane. Major SNARE protein of synaptic vesicles which mediates fusion of synaptic vesicles to release neurotransmitters. Essential for fast vesicular exocytosis and activity-dependent neurotransmitter release as well as fast endocytosis that mediates rapid reuse of synaptic vesicles. Modulates the gating characteristics of the delayed rectifier voltage-dependent potassium channel KCNB1. This chain is Vesicle-associated membrane protein 2 (VAMP2), found in Bos taurus (Bovine).